Here is a 412-residue protein sequence, read N- to C-terminus: Tyrosine--tRNA ligase (412 aa).

The short motif at 50–59 (PTGTDIHLGH) is the 'HIGH' region element. Positions 244 to 248 (KMSKS) match the 'KMSKS' region motif. An ATP-binding site is contributed by lysine 247. The S4 RNA-binding domain maps to 348–411 (VKFFYLLSSL…IGKKIIKRFE (64 aa)).

The protein belongs to the class-I aminoacyl-tRNA synthetase family. TyrS type 2 subfamily. Homodimer.

The protein localises to the cytoplasm. The enzyme catalyses tRNA(Tyr) + L-tyrosine + ATP = L-tyrosyl-tRNA(Tyr) + AMP + diphosphate + H(+). Its function is as follows. Catalyzes the attachment of tyrosine to tRNA(Tyr) in a two-step reaction: tyrosine is first activated by ATP to form Tyr-AMP and then transferred to the acceptor end of tRNA(Tyr). The polypeptide is Tyrosine--tRNA ligase (Prochlorococcus marinus (strain MIT 9312)).